The following is a 189-amino-acid chain: Peptidyl-tRNA hydrolase (189 aa).

Residue Y16 coordinates tRNA. H21 functions as the Proton acceptor in the catalytic mechanism. Positions 67, 69, and 115 each coordinate tRNA.

Belongs to the PTH family. As to quaternary structure, monomer.

The protein resides in the cytoplasm. The enzyme catalyses an N-acyl-L-alpha-aminoacyl-tRNA + H2O = an N-acyl-L-amino acid + a tRNA + H(+). In terms of biological role, hydrolyzes ribosome-free peptidyl-tRNAs (with 1 or more amino acids incorporated), which drop off the ribosome during protein synthesis, or as a result of ribosome stalling. Catalyzes the release of premature peptidyl moieties from peptidyl-tRNA molecules trapped in stalled 50S ribosomal subunits, and thus maintains levels of free tRNAs and 50S ribosomes. This chain is Peptidyl-tRNA hydrolase, found in Legionella pneumophila (strain Corby).